The sequence spans 83 residues: Cytotoxin homolog 5V (83 aa).

The N-terminal stretch at 1 to 21 (MKTLLLTLVVVTIVCLDLGYT) is a signal peptide. 4 disulfides stabilise this stretch: Cys-24–Cys-43, Cys-36–Cys-61, Cys-65–Cys-76, and Cys-77–Cys-82.

Belongs to the three-finger toxin family. Short-chain subfamily. Orphan group XV sub-subfamily. As to expression, expressed by the venom gland.

Its subcellular location is the secreted. It localises to the target cell membrane. Functionally, has low cytotoxic activity. The sequence is that of Cytotoxin homolog 5V from Naja atra (Chinese cobra).